Here is a 237-residue protein sequence, read N- to C-terminus: Glucosamine-6-phosphate deaminase (237 aa).

Residue Asp-67 is the Proton acceptor; for enolization step of the active site. The For ring-opening step role is filled by Asn-136. The active-site Proton acceptor; for ring-opening step is the His-138. Residue Glu-143 is the For ring-opening step of the active site.

It belongs to the glucosamine/galactosamine-6-phosphate isomerase family. NagB subfamily.

It carries out the reaction alpha-D-glucosamine 6-phosphate + H2O = beta-D-fructose 6-phosphate + NH4(+). Its pathway is amino-sugar metabolism; N-acetylneuraminate degradation; D-fructose 6-phosphate from N-acetylneuraminate: step 5/5. Functionally, catalyzes the reversible isomerization-deamination of glucosamine 6-phosphate (GlcN6P) to form fructose 6-phosphate (Fru6P) and ammonium ion. This chain is Glucosamine-6-phosphate deaminase, found in Lysinibacillus sphaericus (strain C3-41).